Here is a 592-residue protein sequence, read N- to C-terminus: Putative esterase (592 aa).

A helical transmembrane segment spans residues 12 to 32 (LTLIAYLSVLMGVSVYFYVLI). N-linked (GlcNAc...) asparagine; by host glycosylation is found at Asn68, Asn83, Asn95, Asn447, and Asn510. His513 acts as the Charge relay system in catalysis. The N-linked (GlcNAc...) asparagine; by host glycan is linked to Asn528.

It belongs to the type-B carboxylesterase/lipase family.

The protein resides in the membrane. The catalysed reaction is a carboxylic ester + H2O = an alcohol + a carboxylate + H(+). In Spodoptera frugiperda (Fall armyworm), this protein is Putative esterase.